The sequence spans 527 residues: Peptide chain release factor 3 (527 aa).

One can recognise a tr-type G domain in the interval 9 to 277 (AKRRTFAIIS…AVVDWAPRPL (269 aa)). GTP is bound by residues 18 to 25 (SHPDAGKT), 86 to 90 (DTPGH), and 140 to 143 (NKLD).

Belongs to the TRAFAC class translation factor GTPase superfamily. Classic translation factor GTPase family. PrfC subfamily.

Its subcellular location is the cytoplasm. Its function is as follows. Increases the formation of ribosomal termination complexes and stimulates activities of RF-1 and RF-2. It binds guanine nucleotides and has strong preference for UGA stop codons. It may interact directly with the ribosome. The stimulation of RF-1 and RF-2 is significantly reduced by GTP and GDP, but not by GMP. The sequence is that of Peptide chain release factor 3 from Pseudomonas fluorescens (strain SBW25).